The following is a 357-amino-acid chain: Homoserine O-succinyltransferase (357 aa).

Cysteine 146 acts as the Acyl-thioester intermediate in catalysis. Positions 167 and 196 each coordinate substrate. The active-site Proton acceptor is the histidine 239. Glutamate 241 is a catalytic residue. Arginine 253 serves as a coordination point for substrate.

Belongs to the MetA family.

It localises to the cytoplasm. The catalysed reaction is L-homoserine + succinyl-CoA = O-succinyl-L-homoserine + CoA. The protein operates within amino-acid biosynthesis; L-methionine biosynthesis via de novo pathway; O-succinyl-L-homoserine from L-homoserine: step 1/1. Its function is as follows. Transfers a succinyl group from succinyl-CoA to L-homoserine, forming succinyl-L-homoserine. In Allochromatium vinosum (strain ATCC 17899 / DSM 180 / NBRC 103801 / NCIMB 10441 / D) (Chromatium vinosum), this protein is Homoserine O-succinyltransferase.